The chain runs to 525 residues: Peptide chain release factor 3 (525 aa).

Residues Asp11–Ala279 enclose the tr-type G domain. GTP contacts are provided by residues Ser20 to Thr27, Asp88 to His92, and Asn142 to Asp145.

The protein belongs to the TRAFAC class translation factor GTPase superfamily. Classic translation factor GTPase family. PrfC subfamily.

It is found in the cytoplasm. In terms of biological role, increases the formation of ribosomal termination complexes and stimulates activities of RF-1 and RF-2. It binds guanine nucleotides and has strong preference for UGA stop codons. It may interact directly with the ribosome. The stimulation of RF-1 and RF-2 is significantly reduced by GTP and GDP, but not by GMP. The chain is Peptide chain release factor 3 from Levilactobacillus brevis (strain ATCC 367 / BCRC 12310 / CIP 105137 / JCM 1170 / LMG 11437 / NCIMB 947 / NCTC 947) (Lactobacillus brevis).